The chain runs to 120 residues: Large ribosomal subunit protein uL18 (120 aa).

It belongs to the universal ribosomal protein uL18 family. Part of the 50S ribosomal subunit. Part of the 5S rRNA/L5/L18/L25 subcomplex. Contacts the 23S rRNA and 5S rRNA. Required for catalysis of RNase M5.

Functionally, this is one of the proteins that bind and probably mediate the attachment of the 5S RNA into the large ribosomal subunit, where it forms part of the central protuberance. Its function is as follows. Required for correct processing of both the 5' and 3' ends of 5S rRNA precursor, which is does in conjunction with ribonuclease M5 (RNase M5, rnmV). Possibly folds the 5S rRNA precursor into the correct conformation, thus acting as a chaperone. The protein is Large ribosomal subunit protein uL18 of Bacillus subtilis (strain 168).